The chain runs to 206 residues: MSFLNIFTFFSVLVSVATAVRFDLTNVTCNNLHGPHCGTYVMEVVGQNGTFLGQSTFAGADVLTESAGDAWARYLGQETRFLPKLTTIASNDTKNFSPLIFTTNIYTCNPQSFGDAMVPFANTVTGEIEYNSWADTADNASFITGLANQLFNSTQYGVQVASCYPNFASVILSTPTVNIFAANETLPDYCTAIQLKAVCPPDAGFA.

A signal peptide spans 1–19; it reads MSFLNIFTFFSVLVSVATA.

The protein belongs to the VEL1 family.

The protein localises to the cytoplasm. The protein resides in the cytosol. The sequence is that of VEL1-related protein SCY_5430 from Saccharomyces cerevisiae (strain YJM789) (Baker's yeast).